A 218-amino-acid chain; its full sequence is GTP cyclohydrolase 1 (218 aa).

Zn(2+) contacts are provided by cysteine 109, histidine 112, and cysteine 180.

This sequence belongs to the GTP cyclohydrolase I family. As to quaternary structure, toroid-shaped homodecamer, composed of two pentamers of five dimers.

It carries out the reaction GTP + H2O = 7,8-dihydroneopterin 3'-triphosphate + formate + H(+). It participates in cofactor biosynthesis; 7,8-dihydroneopterin triphosphate biosynthesis; 7,8-dihydroneopterin triphosphate from GTP: step 1/1. The sequence is that of GTP cyclohydrolase 1 from Mannheimia succiniciproducens (strain KCTC 0769BP / MBEL55E).